Reading from the N-terminus, the 465-residue chain is FeMo cofactor biosynthesis protein FixZ (465 aa).

Positions 1–36 (MSEPEIKVGKTSSALFDRAPMAPSMPGGRASSSHGL) are disordered. Residues 61 to 312 (HHYFARMHXX…MRHCQQCRAD (252 aa)) enclose the Radical SAM core domain. [4Fe-4S] cluster contacts are provided by Cys-75 and Cys-79. Tyr-81 contacts S-adenosyl-L-methionine. Residue Cys-82 coordinates [4Fe-4S] cluster. Residues Gly-129, Thr-181, and Ile-233 each contribute to the S-adenosyl-L-methionine site. Residues Cys-306 and Cys-309 each contribute to the [4Fe-4S] cluster site.

Belongs to the radical SAM superfamily. NifB family. [4Fe-4S] cluster serves as cofactor.

Its pathway is cofactor biosynthesis; Fe-Mo cofactor biosynthesis. Functionally, involved in the biosynthesis of the iron-molybdenum cofactor (FeMo-co or M-cluster) found in the dinitrogenase enzyme of the nitrogenase complex in nitrogen-fixing microorganisms. Catalyzes the crucial step of radical SAM-dependent carbide insertion that occurs concomitant with the insertion of a 9th sulfur and the rearrangement/coupling of two [4Fe-4S] clusters into a [8Fe-9S-C] cluster, the precursor to the M-cluster. The chain is FeMo cofactor biosynthesis protein FixZ (fixZ) from Rhizobium leguminosarum.